Consider the following 30-residue polypeptide: Rothein 3.3 (30 aa).

Leucine amide is present on Leu-30.

As to expression, expressed by the skin dorsal glands.

The protein resides in the secreted. Lacks antimicrobial activity. Does not inhibit the formation of NO by neuronal nitric oxide. This chain is Rothein 3.3, found in Litoria rothii (Roth's tree frog).